The following is a 623-amino-acid chain: MAU2 chromatid cohesion factor homolog (623 aa).

TPR repeat units lie at residues 96-129, 451-484, and 491-524; these read FDTA…SQNN, GGFY…ANAE, and SCSL…ASKI.

It belongs to the SCC4/mau-2 family. Interacts with Nipped-B to form the cohesin loading complex.

Its subcellular location is the nucleus. The protein resides in the nucleoplasm. In terms of biological role, required for association of the cohesin complex with chromatin during interphase. Plays a role in sister chromatid cohesion and normal progression through prometaphase. The protein is MAU2 chromatid cohesion factor homolog of Drosophila grimshawi (Hawaiian fruit fly).